Consider the following 674-residue polypeptide: 1,4-alpha-glucan branching enzyme GlgB 1 (674 aa).

Catalysis depends on Asp-336, which acts as the Nucleophile. Residue Glu-389 is the Proton donor of the active site.

The protein belongs to the glycosyl hydrolase 13 family. GlgB subfamily. In terms of assembly, monomer.

It catalyses the reaction Transfers a segment of a (1-&gt;4)-alpha-D-glucan chain to a primary hydroxy group in a similar glucan chain.. It participates in glycan biosynthesis; glycogen biosynthesis. In terms of biological role, catalyzes the formation of the alpha-1,6-glucosidic linkages in glycogen by scission of a 1,4-alpha-linked oligosaccharide from growing alpha-1,4-glucan chains and the subsequent attachment of the oligosaccharide to the alpha-1,6 position. In Clostridium perfringens (strain 13 / Type A), this protein is 1,4-alpha-glucan branching enzyme GlgB 1 (glgB1).